Consider the following 263-residue polypeptide: UPF0246 protein Mmar10_0828 (263 aa).

It belongs to the UPF0246 family.

The chain is UPF0246 protein Mmar10_0828 from Maricaulis maris (strain MCS10) (Caulobacter maris).